We begin with the raw amino-acid sequence, 340 residues long: Entry-fusion complex protein OPG094 (340 aa).

A lipid anchor (N-myristoyl glycine; by host) is attached at glycine 2. The Virion surface segment spans residues glycine 2 to aspartate 319. A helical; Signal-anchor for type II membrane protein transmembrane segment spans residues leucine 320–isoleucine 340.

It belongs to the orthopoxvirus OPG086 family. In terms of assembly, interacts with OPG143. Component of the entry fusion complex (EFC) composed of OPG053, OPG076, OPG086, OPG094, OPG095, OPG099, OPG107, OPG143, OPG104, OPG147 and OPG155. Except for OPG095 and OPG053, each of the EFC proteins is required for assembly or stability of the complex. Unglycosylated because produced in viral factories instead of the classic ER -Golgi route.

It localises to the virion membrane. Component of the entry fusion complex (EFC), which consists of 11 proteins. During cell infection, this complex mediates entry of the virion core into the host cytoplasm by a two-step mechanism consisting of lipid mixing of the viral and cellular membranes and subsequent pore formation. The chain is Entry-fusion complex protein OPG094 (OPG094) from Homo sapiens (Human).